An 85-amino-acid polypeptide reads, in one-letter code: Probable Sec-independent protein translocase protein TatE (85 aa).

A helical membrane pass occupies residues 1–21; sequence MEGLSITKLLVVGILIVLLFG. The interval 64–85 is disordered; that stretch reads KTVAETKAASDSQAAASVERKD.

This sequence belongs to the TatA/E family. TatE subfamily.

The protein resides in the cell inner membrane. Functionally, part of the twin-arginine translocation (Tat) system that transports large folded proteins containing a characteristic twin-arginine motif in their signal peptide across membranes. TatE shares overlapping functions with TatA. This chain is Probable Sec-independent protein translocase protein TatE, found in Yersinia pestis.